We begin with the raw amino-acid sequence, 961 residues long: Leucine-rich repeat-containing protein egg-6 (961 aa).

The first 18 residues, 1 to 18, serve as a signal peptide directing secretion; sequence MRWLTLIAVAHLIAFLSS. The Extracellular portion of the chain corresponds to 19 to 854; sequence AEITCPRIPE…EQNERHRNIR (836 aa). LRR repeat units follow at residues 60–78, 79–101, 103–124, 125–148, 150–172, 174–197, 199–222, 223–245, 247–269, 270–294, 305–316, 317–339, 340–363, 364–387, 388–411, 413–435, and 437–455; these read IDELHILNGTDVKIESLPF, NGLRTIAILNSTLQSFSPTAWRH, EATIEHITINGNELKTVPVFGN, LSTLMSMNLNSNQISSIPDKAFNG, SALTQLRLENNAICDFPPKSLDA, KASLVLLDVSGNCLDAIPAQILRN, ANLMYLDLGSNNISEINNFELMNL, PFLRELRVQNNTLRRIHPMAFMN, PQLQYLYLQDNIISTLDGNRLQG, FKNLEVLDVSNNALYALPSLKDLPN, ITKIETLAFSNN, PNLQLISVQNNNIVQISRNSFES, LDKLVVLLVGNNSLAKIERGMFDG, MKNLQQLSIRNNTLTALDASSFAQ, LAHLTTLDLGHNKIHDIEEGTFDK, SKLFWLDLSNNKISGFKTSVFKK, and ISNILLDGNQLICDESFNE. Residues 855–875 traverse the membrane as a helical segment; the sequence is IITAIALAFVGAVTVVVIIFF. At 876 to 961 the chain is on the cytoplasmic side; that stretch reads VNYTKKQRRL…PQAVSHRSRH (86 aa). The segment at 890-943 is disordered; sequence VYRSSPSSSGSSGQNAANESGRSSAAPSPIRPPLMNIPKTPNNRTMESTFGQPQ. Residues 893 to 902 are compositionally biased toward low complexity; the sequence is SSPSSSGSSG. Residues 928-943 are compositionally biased toward polar residues; the sequence is KTPNNRTMESTFGQPQ.

As to expression, in L1 larvae, expressed in a subset of epithelial cells including epidermal, vulval and rectal cells and the excretory duct and pore. Also detected in some neurons. Absent from internal epithelia such as the gut and pharyngeal tubes.

The protein resides in the apical cell membrane. Functionally, required for apical extracellular matrix organization and epithelial junction maintenance. This Caenorhabditis elegans protein is Leucine-rich repeat-containing protein egg-6.